The sequence spans 168 residues: Endoribonuclease YbeY (168 aa).

Zn(2+) contacts are provided by His-123, His-127, and His-133.

This sequence belongs to the endoribonuclease YbeY family. Zn(2+) serves as cofactor.

Its subcellular location is the cytoplasm. Single strand-specific metallo-endoribonuclease involved in late-stage 70S ribosome quality control and in maturation of the 3' terminus of the 16S rRNA. This is Endoribonuclease YbeY from Francisella tularensis subsp. tularensis (strain SCHU S4 / Schu 4).